The sequence spans 247 residues: ABC-type transporter ATP-binding protein EcsA (247 aa).

One can recognise an ABC transporter domain in the interval 4–234 (LSVKDLTGGY…FGMKDAALDD (231 aa)). 36–43 (GLNGAGKS) is an ATP binding site.

It belongs to the ABC transporter superfamily.

In terms of biological role, has a role in exoprotein production, sporulation and competence. The polypeptide is ABC-type transporter ATP-binding protein EcsA (ecsA) (Bacillus subtilis (strain 168)).